The following is a 203-amino-acid chain: Gramillins biosynthetic cluster protein FGSG_00038 (203 aa).

It participates in mycotoxin biosynthesis. Part of the gene cluster that mediates the biosynthesis of gramillins A and B, bicyclic lipopeptides that induce cell death in maize leaves but not in wheat leaves. The nonribosomal peptide synthetase GRA1 incorporates respectively a glutamic adic (Glu), a leucine (Leu), a serine (Ser), a hydroxyglutamine (HOGln), a 2-amino decanoic acid, and 2 cysteins (CysB and CysA). The biosynthesis of 2-amino decanoic acid incorporated in gramillins could be initiated by a fatty acid synthase composed of the alpha and beta subunits FGSG_00036 and FGSG_11656. The cytochrome P450 monooxygenase FGSG_15680 could hydroxylate the fatty acid chain. Subsequent oxidation to the ketone by the oxidoreductase FGSG_00048 and transamination by aminotransferase FGSG_00049 could form 2-amino-decanoic acid. On the other hand, FGSG_15680 could also be responsible for the HO-modified glutamine at the gamma-position. Whether hydroxylation occurs on the fully assembled product or on the Gln residue prior to assembly into the gramillins requires further proof. The thioredoxin FGSG_00043 could also be required for the disulfide-bond formation between CysA and CysB. The specific involvement of the remaining proteins from the cluster is more difficult to discern, but could have broader regulatory (FGSG_00040 and FGSG_11657) or enzymatic functions (FGSG_00044 and FGSG_00045). The final C-domain of GRA1 does not possess the expected sequence of a termination CT domain, often implicated in macrocyclization and release of a cyclopeptidein fungal NRPs; and the thioesterase FGSG_00047 may act in concert with the terminal C-domain of GRA1 to catalyze the formation of the macrocyclic anhydride and release of the products. The chain is Gramillins biosynthetic cluster protein FGSG_00038 from Gibberella zeae (strain ATCC MYA-4620 / CBS 123657 / FGSC 9075 / NRRL 31084 / PH-1) (Wheat head blight fungus).